We begin with the raw amino-acid sequence, 98 residues long: NADH-ubiquinone oxidoreductase chain 4L (98 aa).

Helical transmembrane passes span 1 to 21, 29 to 49, and 59 to 79; these read MTTM…GVFI, TLLC…LILL, and LPLI…ALLV.

This sequence belongs to the complex I subunit 4L family. As to quaternary structure, core subunit of respiratory chain NADH dehydrogenase (Complex I) which is composed of 45 different subunits.

Its subcellular location is the mitochondrion inner membrane. It catalyses the reaction a ubiquinone + NADH + 5 H(+)(in) = a ubiquinol + NAD(+) + 4 H(+)(out). Its function is as follows. Core subunit of the mitochondrial membrane respiratory chain NADH dehydrogenase (Complex I) which catalyzes electron transfer from NADH through the respiratory chain, using ubiquinone as an electron acceptor. Part of the enzyme membrane arm which is embedded in the lipid bilayer and involved in proton translocation. This is NADH-ubiquinone oxidoreductase chain 4L (MT-ND4L) from Ornithorhynchus anatinus (Duckbill platypus).